Here is a 230-residue protein sequence, read N- to C-terminus: 5'-methylthioadenosine/S-adenosylhomocysteine nucleosidase (230 aa).

The Proton acceptor role is filled by E12. Substrate is bound by residues G78, I153, and M174–E175. D198 functions as the Proton donor in the catalytic mechanism.

The protein belongs to the PNP/UDP phosphorylase family. MtnN subfamily.

It carries out the reaction S-adenosyl-L-homocysteine + H2O = S-(5-deoxy-D-ribos-5-yl)-L-homocysteine + adenine. It catalyses the reaction S-methyl-5'-thioadenosine + H2O = 5-(methylsulfanyl)-D-ribose + adenine. The enzyme catalyses 5'-deoxyadenosine + H2O = 5-deoxy-D-ribose + adenine. It participates in amino-acid biosynthesis; L-methionine biosynthesis via salvage pathway; S-methyl-5-thio-alpha-D-ribose 1-phosphate from S-methyl-5'-thioadenosine (hydrolase route): step 1/2. Its function is as follows. Catalyzes the irreversible cleavage of the glycosidic bond in both 5'-methylthioadenosine (MTA) and S-adenosylhomocysteine (SAH/AdoHcy) to adenine and the corresponding thioribose, 5'-methylthioribose and S-ribosylhomocysteine, respectively. Also cleaves 5'-deoxyadenosine, a toxic by-product of radical S-adenosylmethionine (SAM) enzymes, into 5-deoxyribose and adenine. The protein is 5'-methylthioadenosine/S-adenosylhomocysteine nucleosidase of Shewanella sediminis (strain HAW-EB3).